The sequence spans 296 residues: D-alanine--D-alanine ligase (296 aa).

Residues 103–293 (KEILMHHRMP…FDSFVKRIIE (191 aa)) form the ATP-grasp domain. 129–180 (ISFPVAVKPSSGGSSIATFKVKSIQELKHAYEEASKYGEVMIEQWVTGKEIT) is an ATP binding site. 3 residues coordinate Mg(2+): D247, E260, and N262.

Belongs to the D-alanine--D-alanine ligase family. It depends on Mg(2+) as a cofactor. Requires Mn(2+) as cofactor.

It localises to the cytoplasm. It catalyses the reaction 2 D-alanine + ATP = D-alanyl-D-alanine + ADP + phosphate + H(+). It functions in the pathway cell wall biogenesis; peptidoglycan biosynthesis. Its function is as follows. Cell wall formation. The polypeptide is D-alanine--D-alanine ligase (Francisella tularensis subsp. novicida (strain U112)).